Reading from the N-terminus, the 61-residue chain is Calprismin (61 aa).

Post-translationally, glycosylated. In terms of tissue distribution, expressed by the calcifying mantle epithelium and incorporated into the shell's calcitic prismatic layer.

The polypeptide is Calprismin (Pinna nobilis (Noble pen shell)).